Here is a 388-residue protein sequence, read N- to C-terminus: GTPase Obg (388 aa).

Residues 4–162 (SNFVDYVKIY…MTVIMELKLL (159 aa)) enclose the Obg domain. The OBG-type G domain maps to 163–329 (ADVGLVGFPN…LKDILWEELN (167 aa)). GTP contacts are provided by residues 169 to 176 (GFPNAGKS), 194 to 198 (FTTLE), 216 to 219 (DIPG), 283 to 286 (TKSD), and 310 to 312 (SSV). Residues Ser-176 and Thr-196 each coordinate Mg(2+). Residues 352–388 (LKDMGEDEELDYEYEEDADDEDDDLDYEYEEEDWEEK) form a disordered region. A compositionally biased stretch (acidic residues) spans 356–388 (GEDEELDYEYEEDADDEDDDLDYEYEEEDWEEK).

The protein belongs to the TRAFAC class OBG-HflX-like GTPase superfamily. OBG GTPase family. In terms of assembly, monomer. The cofactor is Mg(2+).

Its subcellular location is the cytoplasm. Functionally, an essential GTPase which binds GTP, GDP and possibly (p)ppGpp with moderate affinity, with high nucleotide exchange rates and a fairly low GTP hydrolysis rate. Plays a role in control of the cell cycle, stress response, ribosome biogenesis and in those bacteria that undergo differentiation, in morphogenesis control. In Bacteroides thetaiotaomicron (strain ATCC 29148 / DSM 2079 / JCM 5827 / CCUG 10774 / NCTC 10582 / VPI-5482 / E50), this protein is GTPase Obg.